Consider the following 282-residue polypeptide: HTH-type transcriptional activator RhaR (282 aa).

The region spanning 179–277 (DKLITALANS…GMTPSQWRHL (99 aa)) is the HTH araC/xylS-type domain. 2 DNA-binding regions (H-T-H motif) span residues 196–217 (DAFCQQEQCSERVLRQQFRAQT) and 244–267 (ISEISMQCGFEDSNYFSVVFTRET).

Binds DNA as a dimer.

It localises to the cytoplasm. Its function is as follows. Activates expression of the rhaSR operon in response to L-rhamnose. This is HTH-type transcriptional activator RhaR from Salmonella agona (strain SL483).